Here is a 418-residue protein sequence, read N- to C-terminus: Serine hydroxymethyltransferase (418 aa).

(6S)-5,6,7,8-tetrahydrofolate is bound by residues L120 and G124–L126. Position 229 is an N6-(pyridoxal phosphate)lysine (K229). S353–F355 provides a ligand contact to (6S)-5,6,7,8-tetrahydrofolate.

Belongs to the SHMT family. In terms of assembly, homodimer. Pyridoxal 5'-phosphate is required as a cofactor.

The protein localises to the cytoplasm. It catalyses the reaction (6R)-5,10-methylene-5,6,7,8-tetrahydrofolate + glycine + H2O = (6S)-5,6,7,8-tetrahydrofolate + L-serine. It participates in one-carbon metabolism; tetrahydrofolate interconversion. It functions in the pathway amino-acid biosynthesis; glycine biosynthesis; glycine from L-serine: step 1/1. Its function is as follows. Catalyzes the reversible interconversion of serine and glycine with tetrahydrofolate (THF) serving as the one-carbon carrier. This reaction serves as the major source of one-carbon groups required for the biosynthesis of purines, thymidylate, methionine, and other important biomolecules. Also exhibits THF-independent aldolase activity toward beta-hydroxyamino acids, producing glycine and aldehydes, via a retro-aldol mechanism. The polypeptide is Serine hydroxymethyltransferase (Psychrobacter cryohalolentis (strain ATCC BAA-1226 / DSM 17306 / VKM B-2378 / K5)).